Consider the following 421-residue polypeptide: D-amino acid dehydrogenase (421 aa).

Position 3 to 17 (3 to 17 (VIVLGSGVIGVASAY)) interacts with FAD.

The protein belongs to the DadA oxidoreductase family. The cofactor is FAD.

The enzyme catalyses a D-alpha-amino acid + A + H2O = a 2-oxocarboxylate + AH2 + NH4(+). Its pathway is amino-acid degradation; D-alanine degradation; NH(3) and pyruvate from D-alanine: step 1/1. Its function is as follows. Oxidative deamination of D-amino acids. The protein is D-amino acid dehydrogenase of Acinetobacter baumannii (strain ATCC 17978 / DSM 105126 / CIP 53.77 / LMG 1025 / NCDC KC755 / 5377).